The sequence spans 398 residues: Immunoglobulin heavy constant alpha 1 (398 aa).

The Extracellular segment spans residues 1-364 (ASPTSPKVFP…TPGANLWPTT (364 aa)). Positions 6-98 (PKVFPLSLCS…HYTNPSQDVT (93 aa)) constitute an Ig-like 1 domain. 2 disulfide bridges follow: Cys26/Cys85 and Cys77/Cys101. Residues 96–122 (DVTVPCPVPSTPPTPSPSTPPTPSPSC) are disordered. A compositionally biased stretch (pro residues) spans 101 to 119 (CPVPSTPPTPSPSTPPTPS). Ser105 carries O-linked (GalNAc...) serine glycosylation. O-linked (GalNAc...) threonine glycosylation is found at Thr106 and Thr109. Residues Ser111 and Ser113 are each glycosylated (O-linked (GalNAc...) serine). 2 O-linked (GalNAc...) threonine glycosylation sites follow: Thr114 and Thr117. Residues Ser119 and Ser121 are each glycosylated (O-linked (GalNAc...) serine). 3 cysteine pairs are disulfide-bonded: Cys123–Cys180, Cys147–Cys204, and Cys250–Cys313. Ig-like domains lie at 125 to 220 (PRLS…ATLS) and 228 to 330 (PEVH…KTID). Residue Asn144 is glycosylated (N-linked (GlcNAc...) (complex) asparagine). An N-linked (GlcNAc...) (complex) asparagine glycan is attached at Pro340. Glu352 is a binding site for 3-hydroxy-L-kynurenine. The chain crosses the membrane as a helical span at residues 365–383 (ITFLTLFLLSLFYSTALTV). The Cytoplasmic portion of the chain corresponds to 384–398 (TSVRGPSGNREGPQY).

In terms of assembly, immunoglobulins are composed of two identical heavy chains and two identical light chains; disulfide-linked. Monomeric or polymeric. Part of the secretory IgA (sIgA) complex that consists of two, four or five IgA monomers, and two additional non-Ig polypeptides, namely the JCHAIN and the secretory component (the proteolytic product of PIGR). Post-translationally, 3-Hydroxykynurenine, an oxidized tryptophan metabolite that is common in biological fluids, reacts with alpha-1-microglobulin to form heterogeneous polycyclic chromophores including hydroxanthommatin. The chromophore reacts with accessible cysteines forming non-reducible thioether cross-links with Ig alpha-1 chain C region Cys-352. In terms of processing, N- and O-glycosylated. N-glycan at Asn-144: Hex5HexNAc4.

The protein localises to the secreted. It localises to the cell membrane. Functionally, constant region of immunoglobulin heavy chains. Immunoglobulins, also known as antibodies, are membrane-bound or secreted glycoproteins produced by B lymphocytes. In the recognition phase of humoral immunity, the membrane-bound immunoglobulins serve as receptors which, upon binding of a specific antigen, trigger the clonal expansion and differentiation of B lymphocytes into immunoglobulins-secreting plasma cells. Secreted immunoglobulins mediate the effector phase of humoral immunity, which results in the elimination of bound antigens. The antigen binding site is formed by the variable domain of one heavy chain, together with that of its associated light chain. Thus, each immunoglobulin has two antigen binding sites with remarkable affinity for a particular antigen. The variable domains are assembled by a process called V-(D)-J rearrangement and can then be subjected to somatic hypermutations which, after exposure to antigen and selection, allow affinity maturation for a particular antigen. Ig alpha is the major immunoglobulin class in body secretions. The chain is Immunoglobulin heavy constant alpha 1 from Homo sapiens (Human).